The chain runs to 283 residues: Para-Rep C10 (283 aa).

Positions 3 to 96 (SIRAIHWCFT…IDGPWEYGTW (94 aa)) constitute a CRESS-DNA virus Rep endonuclease domain. Residues 10 to 13 (CFTL) carry the RCR-1 motif. Positions 36 and 42 each coordinate a divalent metal cation. The RCR-2 motif lies at 42-44 (HLQ). The short motif at 51–71 (KQTTLKKMKELLPGAHLEMAR) is the Nuclear localization signal element. The For DNA cleavage activity role is filled by Tyr-79. Residues 79 to 82 (YCQK) carry the RCR-3 motif. Glu-84 contributes to the a divalent metal cation binding site. Positions 96–102 (WISTGSH) match the Nuclear localization signal motif. Residue 172–180 (GPHGGEGKS) coordinates ATP.

Belongs to the nanoviridea/circoviridae replication-associated protein family. Homooligomer (Potential). Rep binds to repeated DNA motifs (iterons). Requires Mg(2+) as cofactor. Mn(2+) is required as a cofactor.

The protein resides in the host nucleus. The enzyme catalyses ATP + H2O = ADP + phosphate + H(+). Initiates and terminates the replication only of its own subviral DNA molecule. The closed circular ssDNA genome is first converted to a superhelical dsDNA. Rep binds a specific hairpin at the genome origin of replication. Introduces an endonucleolytic nick within the intergenic region of the genome, thereby initiating the rolling circle replication (RCR). Following cleavage, binds covalently to the 5'-phosphate of DNA as a tyrosyl ester. The cleavage gives rise to a free 3'-OH that serves as a primer for the cellular DNA polymerase. The polymerase synthesizes the (+) strand DNA by rolling circle mechanism. After one round of replication, a Rep-catalyzed nucleotidyl transfer reaction releases a circular single-stranded virus genome, thereby terminating the replication. Displays origin-specific DNA cleavage, nucleotidyl transferase, ATPase and helicase activities. In Milk vetch dwarf C10 alphasatellite (MVDC10A), this protein is Para-Rep C10 (C10).